We begin with the raw amino-acid sequence, 501 residues long: Cytochrome P450 monooxygenase esdpH (501 aa).

Residues Arg-5 to Cys-22 form a helical membrane-spanning segment. Cys-446 lines the heme pocket.

The protein belongs to the cytochrome P450 family. The cofactor is heme.

The protein resides in the membrane. The protein operates within secondary metabolite biosynthesis; terpenoid biosynthesis. Cytochrome P450 monooxygenase; part of the cluster that mediates the biosynthesis of shearones, diterpenoid pyrones (DPs) which are structurally diverse meroterpenoids consisting of a diterpene linked by a pyrone, and which may exhibit a range of bioactivities. Whitin the pathway, esdpH takes part in the molecular scaffold modification via the hydroxylation at C-6' and can transform shearone C into shearone E, shearone D into shearone F, and shearone H into shearone I, the latter being the final product of the pathway. The molecular scaffold is commonly biosynthesized by a series of enzymes including the non-reducing polyketide synthase (NR-PKS) esdpA that generates an alpha-pyrone; the prenyltransferase esdpC that attaches a geranylgeranyl pyrophosphate (GGPP) produced by the GGPP synthase (GGPPS) esdpD onto the pyrone unit; the FAD-dependent monooxygenase esdpE that converts an olefin on the diterpene unit into an epoxide; and the terpene cyclase esdpB that catalyzes the cyclization reactions to give the molecular backbone shearone A. In the modification steps, esdpF oxidizes the hydroxy group to a ketone at C-3 and esdpG then attaches hydroxy groups at both C-11 and C-12. After that, esdpI hydroxylates at C-20 and esdpH hydroxylates at C-6'. The ether bridge is generated by nucleophilic attack of the hydroxy group at C-20 to the carbonyl carbon at C-3. EsdpH can also functions prior to esdpI. The different combinations of these modification enzymes lead to the production of diverse shearone derivatives, shearone I being the end product of the pathway. The alpha-ketoglutarate-dependent dioxygenase esdpJ seems not to be involved in this pathway. This chain is Cytochrome P450 monooxygenase esdpH, found in Penicillium shearii (Eupenicillium shearii).